A 181-amino-acid chain; its full sequence is Mating-type protein A1 (181 aa).

The homeobox DNA-binding region spans 122–181 (DKKKRRHIPESSKELLEKAFKVKRFPNSKERERIARECGISPLQVRVWFTNKRARSKSRA).

It belongs to the MATA1 family.

It is found in the nucleus. Mating type proteins are sequence specific DNA-binding proteins that act as master switches in yeast differentiation by controlling gene expression in a cell type-specific fashion. The protein is Mating-type protein A1 (MATA1) of Pichia angusta (Yeast).